Here is a 230-residue protein sequence, read N- to C-terminus: Aspartate and serine-rich protein (230 aa).

N-linked (GlcNAc...) asparagine glycans are attached at residues Asn17, Asn132, and Asn139. A disordered region spans residues 112–230 (LNGGATAGGV…DSDSNDTDSD (119 aa)). Over residues 126–140 (DTDESSNDTDEDSND) the composition is skewed to acidic residues. A compositionally biased stretch (basic and acidic residues) spans 141–161 (SDSKDTDSDSKDTDSDSKDSD). N-linked (GlcNAc...) asparagine glycans are attached at residues Asn163 and Asn170. The span at 173–223 (DSKDTDSDSKDSDSKDTDSDSKDTDSDSKDSDSKDTDSDSKDTDSDSKDSD) shows a compositional bias: basic and acidic residues. A glycan (N-linked (GlcNAc...) asparagine) is linked at Asn225.

In terms of tissue distribution, component of the acid-insoluble organic matrix of calcified layers of the shell (at protein level).

Its subcellular location is the secreted. In Lottia gigantea (Giant owl limpet), this protein is Aspartate and serine-rich protein.